Reading from the N-terminus, the 195-residue chain is Imidazoleglycerol-phosphate dehydratase (195 aa).

Belongs to the imidazoleglycerol-phosphate dehydratase family.

The protein localises to the cytoplasm. The catalysed reaction is D-erythro-1-(imidazol-4-yl)glycerol 3-phosphate = 3-(imidazol-4-yl)-2-oxopropyl phosphate + H2O. It participates in amino-acid biosynthesis; L-histidine biosynthesis; L-histidine from 5-phospho-alpha-D-ribose 1-diphosphate: step 6/9. This is Imidazoleglycerol-phosphate dehydratase from Maridesulfovibrio salexigens (strain ATCC 14822 / DSM 2638 / NCIMB 8403 / VKM B-1763) (Desulfovibrio salexigens).